A 632-amino-acid polypeptide reads, in one-letter code: Probable potassium transport system protein Kup 1 (632 aa).

12 helical membrane passes run 19-39 (LVLGAVGVVFGDIGTSPLYAL), 59-79 (VISMLFWAMIIVVSIKYVVFV), 110-130 (VLMMLGIFGACMFYGDAVITP), 146-166 (PQLSQFVIPITLMILAALFLI), 178-198 (FGPIMTAWFLALGGLGILHLV), 213-233 (ITFLVEHALQAFIVLGSVFLV), 256-276 (WFVLVMPCLMLNYFGQGAMLL), 298-318 (MVLLATCATVIASQAVISGAF), 346-366 (IYLPVINWLLLVLVIGVVISF), 373-393 (AAAYGIAVTTTMVITTILAAV), 403-423 (PALVAVVGLAFIVVDLSFFAA), and 428-448 (VAEGGWFPLLLGSAAFFLLMT).

It belongs to the HAK/KUP transporter (TC 2.A.72) family.

It is found in the cell inner membrane. The catalysed reaction is K(+)(in) + H(+)(in) = K(+)(out) + H(+)(out). Transport of potassium into the cell. Likely operates as a K(+):H(+) symporter. The sequence is that of Probable potassium transport system protein Kup 1 from Cupriavidus necator (strain ATCC 17699 / DSM 428 / KCTC 22496 / NCIMB 10442 / H16 / Stanier 337) (Ralstonia eutropha).